Reading from the N-terminus, the 169-residue chain is Copper-resistant cuproprotein CopI (169 aa).

A signal peptide spans 1–20; it reads MIKKTLLVIALTFTVTTAFA. Positions 98, 153, 158, and 163 each coordinate Cu(2+).

This sequence belongs to the CopI family.

The protein localises to the periplasm. Functionally, involved in copper tolerance. Mediates copper tolerance in aerobiosis. May also mediate tolerance under anaerobiosis. Not required for virulence or colonization in the mouse model. The polypeptide is Copper-resistant cuproprotein CopI (Vibrio cholerae serotype O1 (strain ATCC 39315 / El Tor Inaba N16961)).